The sequence spans 580 residues: Methyl-CpG-binding domain protein 4 (580 aa).

The disordered stretch occupies residues 1–36 (MGTTGLESLSLGDRGAAPTVTSSERLVPDPPNDLRK). Positions 76–148 (ATAGTECRKS…EDFDFTVLSK (73 aa)) constitute an MBD domain. 2 positions are modified to phosphoserine: Ser-318 and Ser-428. Asp-560 is an active-site residue.

As to quaternary structure, interacts with MLH1.

It localises to the nucleus. In terms of biological role, mismatch-specific DNA N-glycosylase involved in DNA repair. Has thymine glycosylase activity and is specific for G:T mismatches within methylated and unmethylated CpG sites. Can also remove uracil or 5-fluorouracil in G:U mismatches. Has no lyase activity. Was first identified as methyl-CpG-binding protein. This is Methyl-CpG-binding domain protein 4 from Homo sapiens (Human).